The following is a 547-amino-acid chain: Chaperonin GroEL (547 aa).

ATP contacts are provided by residues threonine 30–proline 33, lysine 51, aspartate 87–threonine 91, glycine 415, asparagine 479–alanine 481, and aspartate 495. The disordered stretch occupies residues proline 525–methionine 547. Gly residues predominate over residues alanine 532–methionine 547.

The protein belongs to the chaperonin (HSP60) family. In terms of assembly, forms a cylinder of 14 subunits composed of two heptameric rings stacked back-to-back. Interacts with the co-chaperonin GroES.

Its subcellular location is the cytoplasm. The enzyme catalyses ATP + H2O + a folded polypeptide = ADP + phosphate + an unfolded polypeptide.. In terms of biological role, together with its co-chaperonin GroES, plays an essential role in assisting protein folding. The GroEL-GroES system forms a nano-cage that allows encapsulation of the non-native substrate proteins and provides a physical environment optimized to promote and accelerate protein folding. This is Chaperonin GroEL from Nitrosomonas europaea (strain ATCC 19718 / CIP 103999 / KCTC 2705 / NBRC 14298).